The primary structure comprises 236 residues: Ubiquinone biosynthesis O-methyltransferase (236 aa).

4 residues coordinate S-adenosyl-L-methionine: arginine 39, glycine 59, aspartate 80, and methionine 124.

Belongs to the methyltransferase superfamily. UbiG/COQ3 family.

The enzyme catalyses a 3-demethylubiquinol + S-adenosyl-L-methionine = a ubiquinol + S-adenosyl-L-homocysteine + H(+). It carries out the reaction a 3-(all-trans-polyprenyl)benzene-1,2-diol + S-adenosyl-L-methionine = a 2-methoxy-6-(all-trans-polyprenyl)phenol + S-adenosyl-L-homocysteine + H(+). It functions in the pathway cofactor biosynthesis; ubiquinone biosynthesis. Functionally, O-methyltransferase that catalyzes the 2 O-methylation steps in the ubiquinone biosynthetic pathway. This chain is Ubiquinone biosynthesis O-methyltransferase, found in Shewanella halifaxensis (strain HAW-EB4).